Here is a 194-residue protein sequence, read N- to C-terminus: Imidazoleglycerol-phosphate dehydratase (194 aa).

The protein belongs to the imidazoleglycerol-phosphate dehydratase family.

Its subcellular location is the cytoplasm. It carries out the reaction D-erythro-1-(imidazol-4-yl)glycerol 3-phosphate = 3-(imidazol-4-yl)-2-oxopropyl phosphate + H2O. Its pathway is amino-acid biosynthesis; L-histidine biosynthesis; L-histidine from 5-phospho-alpha-D-ribose 1-diphosphate: step 6/9. The protein is Imidazoleglycerol-phosphate dehydratase of Bacillus anthracis (strain A0248).